A 334-amino-acid polypeptide reads, in one-letter code: Tryptophan--tRNA ligase (334 aa).

Residues 12 to 14 (QPS) and 20 to 21 (GN) each bind ATP. The 'HIGH' region motif lies at 13 to 21 (PSGIPTLGN). Residue D136 coordinates L-tryptophan. ATP contacts are provided by residues 148-150 (GKD), I187, and 196-200 (KMSKS). Residues 196–200 (KMSKS) carry the 'KMSKS' region motif.

The protein belongs to the class-I aminoacyl-tRNA synthetase family. Homodimer.

It localises to the cytoplasm. It carries out the reaction tRNA(Trp) + L-tryptophan + ATP = L-tryptophyl-tRNA(Trp) + AMP + diphosphate + H(+). Its function is as follows. Catalyzes the attachment of tryptophan to tRNA(Trp). In Wigglesworthia glossinidia brevipalpis, this protein is Tryptophan--tRNA ligase.